We begin with the raw amino-acid sequence, 399 residues long: Lipid droplet-regulating VLDL assembly factor AUP1 (399 aa).

Over 1-21 the chain is Cytoplasmic; it reads MEQPSLESMLELQRFPRNPFS. Residues 22-42 lie within the membrane without spanning it; that stretch reads LVLLLLYFPFGLCLFLIRLFI. The Cytoplasmic portion of the chain corresponds to 43-399; the sequence is GAHVFLVSCV…GEEEEEGARG (357 aa). In terms of domain architecture, CUE spans 284–326; the sequence is THIQMAQHVKEVLPQVPLSAIHRDLGHTGCVDTTITNFLEGRV. The interval 332–364 is disordered; it reads EEETTGAAEGTSKSRVSRPLPQGFAKKPEDRHL.

The protein belongs to the AUP1 family.

The protein localises to the endoplasmic reticulum membrane. Its subcellular location is the lipid droplet. Functionally, plays a role in the translocation of terminally misfolded proteins from the endoplasmic reticulum lumen to the cytoplasm and their degradation by the proteasome. Plays a role in lipid droplet formation. Induces lipid droplet clustering. This chain is Lipid droplet-regulating VLDL assembly factor AUP1, found in Xenopus laevis (African clawed frog).